A 614-amino-acid polypeptide reads, in one-letter code: uncharacterized protein (614 aa).

A run of 2 helical transmembrane segments spans residues 494–516 (VAYW…GSTL) and 552–574 (LLIG…IVHA). The segment at 588 to 614 (AVRPRADKDIQTLTHRDEAEEDQEEDS) is disordered. Over residues 591–605 (PRADKDIQTLTHRDE) the composition is skewed to basic and acidic residues.

The protein resides in the cell membrane. This is an uncharacterized protein from Treponema pallidum (strain Nichols).